Consider the following 678-residue polypeptide: PTS system glucose-specific EIICBA component (678 aa).

One can recognise a PTS EIIC type-1 domain in the interval 3–414 (KKLFGQLQRI…FKYKTPGRED (412 aa)). The next 11 helical transmembrane spans lie at 16-36 (LMLP…GTAM), 63-83 (AGGI…AIGL), 89-109 (VAAI…GAFL), 126-146 (VLGI…GALA), 170-190 (FVPI…AWIW), 211-231 (LAVF…LHHI), 273-293 (FMQG…LAIY), 303-323 (VVAG…ITEP), 329-349 (LFVA…SFLI), 355-375 (VHLG…GVLP), and 382-402 (LVIP…RFLI). The PTS EIIB type-1 domain occupies 425–506 (SELPFNVLKA…SLIMKGEITK (82 aa)). C447 (phosphocysteine intermediate; for EIIB activity) is an active-site residue. A PTS EIIA type-1 domain is found at 547-651 (DQVFAQKMMG…STVTPLIITN (105 aa)). The Tele-phosphohistidine intermediate; for EIIA activity role is filled by H599.

It localises to the cell membrane. It catalyses the reaction N(pros)-phospho-L-histidyl-[protein] + D-glucose(out) = D-glucose 6-phosphate(in) + L-histidyl-[protein]. The phosphoenolpyruvate-dependent sugar phosphotransferase system (sugar PTS), a major carbohydrate active transport system, catalyzes the phosphorylation of incoming sugar substrates concomitantly with their translocation across the cell membrane. This system is involved in glucose transport. The polypeptide is PTS system glucose-specific EIICBA component (ptsG) (Staphylococcus saprophyticus subsp. saprophyticus (strain ATCC 15305 / DSM 20229 / NCIMB 8711 / NCTC 7292 / S-41)).